A 151-amino-acid polypeptide reads, in one-letter code: Flagellar assembly factor FliW (151 aa).

The protein belongs to the FliW family. As to quaternary structure, interacts with translational regulator CsrA and flagellin(s).

The protein localises to the cytoplasm. Functionally, acts as an anti-CsrA protein, binds CsrA and prevents it from repressing translation of its target genes, one of which is flagellin. Binds to flagellin and participates in the assembly of the flagellum. The chain is Flagellar assembly factor FliW from Halalkalibacterium halodurans (strain ATCC BAA-125 / DSM 18197 / FERM 7344 / JCM 9153 / C-125) (Bacillus halodurans).